Here is a 2238-residue protein sequence, read N- to C-terminus: RNA-directed RNA polymerase L (2238 aa).

An endonuclease region spans residues 26-284; that stretch reads ITLVTCQNDA…THHSEHPVDC (259 aa). 3 residues coordinate Mn(2+): E51, D89, and E102. K115 is an active-site residue. Positions 1188–1387 constitute a RdRp catalytic domain; that stretch reads TDMKMCVNLG…FISTKFNKFV (200 aa). Residue D1346 coordinates Mg(2+).

Belongs to the Bunyavirales RNA polymerase family. In terms of assembly, homomultimer; the oligomeric structure is essential for the polymerase activity. Interacts with nucleoprotein N. Interacts with protein Z; this interaction inhibits viral transcription and replication, Z partially blocks the product exit tunnel for the releasing nascent RNA product. The cofactor is Mn(2+). Requires Mg(2+) as cofactor.

The protein resides in the virion. Its subcellular location is the host cytoplasm. The enzyme catalyses RNA(n) + a ribonucleoside 5'-triphosphate = RNA(n+1) + diphosphate. RNA-dependent RNA polymerase, which is responsible for the replication and transcription of the viral RNA genome using antigenomic RNA as an intermediate. During transcription, synthesizes subgenomic RNAs and assures their capping by a cap-snatching mechanism, which involves the endonuclease activity cleaving the host capped pre-mRNAs. These short capped RNAs are then used as primers for viral transcription. The 3'-end of subgenomic mRNAs molecules are heterogeneous and not polyadenylated. The replicase function is to direct synthesis of antigenomic and genomic RNA which are encapsidated and non capped. As a consequence of the use of the same enzyme for both transcription and replication, these mechanisms need to be well coordinated. These processes may be regulated by proteins N and Z in a dose-dependent manner. Z protein inhibits the viral polymerase L und thus the viral transcription and RNA synthesis. The sequence is that of RNA-directed RNA polymerase L from Calomys callosus (Large vesper mouse).